The following is a 126-amino-acid chain: UPF0325 protein VFMJ11_2099 (126 aa).

This sequence belongs to the UPF0325 family.

The polypeptide is UPF0325 protein VFMJ11_2099 (Aliivibrio fischeri (strain MJ11) (Vibrio fischeri)).